The following is a 334-amino-acid chain: MGWFFQKKKEFDFGGELDRLEMKLEEAQYNIDNIQSQKKKILFRYTVCSLAIYTIGMAVWASRSSILFQHPLFSKLFRISLYILGVFSLYMFRWAIAWFCEKRLSRARMNLHKLNAEKRKILDALKSRKEYFETQALLEKYGEQPTLAQKKLSNAAAAKSVPGSSSSSSDPMHPQHWYDRVLEGLVGANENSENNREALICSHCFHHNGLASYGEKASDVRYVCLFCKAWNGPPIDKSLPSSEMDSNLQTNPSSISKGKKNNSNNTTQKGPNIISSPQVINASSPVRKAGKKKSKKALPTSPLSSSSPDASYNSVSDSFHTVAASVPESLTPTK.

Residues 1–40 (MGWFFQKKKEFDFGGELDRLEMKLEEAQYNIDNIQSQKKK) are Cytoplasmic-facing. The stretch at 12 to 42 (DFGGELDRLEMKLEEAQYNIDNIQSQKKKIL) forms a coiled coil. Residues 41–61 (ILFRYTVCSLAIYTIGMAVWA) traverse the membrane as a helical segment. At 62–78 (SRSSILFQHPLFSKLFR) the chain is on the lumenal side. The helical transmembrane segment at 79-99 (ISLYILGVFSLYMFRWAIAWF) threads the bilayer. Positions 99–127 (FCEKRLSRARMNLHKLNAEKRKILDALKS) form a coiled coil. Over 100–334 (CEKRLSRARM…SVPESLTPTK (235 aa)) the chain is Cytoplasmic. The C4-type; plays a role in ER morphology zinc-finger motif lies at 201 to 227 (CSHCFHHNGLASYGEKASDVRYVCLFC). The disordered stretch occupies residues 237–315 (KSLPSSEMDS…SSPDASYNSV (79 aa)). Residues 239–252 (LPSSEMDSNLQTNP) show a composition bias toward polar residues. Low complexity predominate over residues 253–270 (SSISKGKKNNSNNTTQKG). Residues 273 to 283 (IISSPQVINAS) are compositionally biased toward polar residues. Phosphoserine is present on Ser-284. A compositionally biased stretch (low complexity) spans 297 to 315 (ALPTSPLSSSSPDASYNSV).

Belongs to the lunapark family.

Its subcellular location is the endoplasmic reticulum membrane. The protein localises to the golgi apparatus membrane. Functionally, plays a role in tubular endoplasmic reticulum network formation and maintenance. This chain is Endoplasmic reticulum junction formation protein lunapark (lnp1), found in Schizosaccharomyces pombe (strain 972 / ATCC 24843) (Fission yeast).